Consider the following 200-residue polypeptide: Holliday junction branch migration complex subunit RuvA (200 aa).

The interval 1-64 (MIGQLTGLVG…EDAIQLFGFA (64 aa)) is domain I. The interval 65 to 143 (TTDERDWFRL…KMPGGGGTVS (79 aa)) is domain II. Residues 144–148 (APGIV) form a flexible linker region. Residues 149–200 (SGPSVENDALLALAGLGFRRAEAWPVLSKVLAENENATLDLAIRLSLKDLAR) are domain III.

It belongs to the RuvA family. Homotetramer. Forms an RuvA(8)-RuvB(12)-Holliday junction (HJ) complex. HJ DNA is sandwiched between 2 RuvA tetramers; dsDNA enters through RuvA and exits via RuvB. An RuvB hexamer assembles on each DNA strand where it exits the tetramer. Each RuvB hexamer is contacted by two RuvA subunits (via domain III) on 2 adjacent RuvB subunits; this complex drives branch migration. In the full resolvosome a probable DNA-RuvA(4)-RuvB(12)-RuvC(2) complex forms which resolves the HJ.

Its subcellular location is the cytoplasm. The RuvA-RuvB-RuvC complex processes Holliday junction (HJ) DNA during genetic recombination and DNA repair, while the RuvA-RuvB complex plays an important role in the rescue of blocked DNA replication forks via replication fork reversal (RFR). RuvA specifically binds to HJ cruciform DNA, conferring on it an open structure. The RuvB hexamer acts as an ATP-dependent pump, pulling dsDNA into and through the RuvAB complex. HJ branch migration allows RuvC to scan DNA until it finds its consensus sequence, where it cleaves and resolves the cruciform DNA. The sequence is that of Holliday junction branch migration complex subunit RuvA from Gluconobacter oxydans (strain 621H) (Gluconobacter suboxydans).